We begin with the raw amino-acid sequence, 544 residues long: High affinity immunoglobulin alpha and immunoglobulin mu Fc receptor (544 aa).

The N-terminal stretch at 1-16 (MPLFLILCLLQGSSFA) is a signal peptide. Topologically, residues 17–462 (LPQKRPHPRW…TFPEDESSSR (446 aa)) are extracellular. In terms of domain architecture, Ig-like V-type spans 61-169 (PNALKGSRLV…NMLFLSMNLT (109 aa)). The interval 75–97 (GGAVTIQCHYAPSSVNRHQRKYW) is mediates immunoglobulin Fc fragment-binding. Residues C82 and C153 are joined by a disulfide bond. A glycan (N-linked (GlcNAc...) asparagine) is linked at N167. The segment at 218-325 (DTVASTPGTS…TTKADRPRED (108 aa)) is disordered. Composition is skewed to polar residues over residues 220–232 (VAST…TTAS) and 280–291 (ASKSRSMSNTTE). The segment covering 307-325 (ASKDRREITTTKADRPRED) has biased composition (basic and acidic residues). A helical membrane pass occupies residues 463–483 (TLAPVSTMLALFMLMALVLLQ). Over 484-544 (RKLRRRRTSQ…LTAPERNPGP (61 aa)) the chain is Cytoplasmic. Residues 511-544 (PQPDQLPHVERKMLQDDSLPAGASLTAPERNPGP) are disordered.

Interacts with IGHM; this interaction facilitates the endocytosis of IgM-coated microbes or IgM-antigen immune complexes. N-glycosylated.

Its subcellular location is the cell membrane. Functions as a receptor for the Fc fragment of IgA and IgM. Binds IgA and IgM with high affinity and mediates their endocytosis. May function in the immune response to microbes mediated by IgA and IgM. The protein is High affinity immunoglobulin alpha and immunoglobulin mu Fc receptor (FCAMR) of Pongo abelii (Sumatran orangutan).